Here is a 563-residue protein sequence, read N- to C-terminus: MTVLLLVVLQMWKATAGHSIAVSQDDGADDWETDPDFVNDVSEKEQRWGAKTVKGSGHQEHINIHQLRENVFQEHQTIKEKELETGPKASHGYGGKFGVEQDRMDKSAVGHEYQSKLSKHCSQVDSVKGFGGKFGVQTDRVDQSAVGFEYQGKTEKHASQKDYSSGFGGKYGVQADRVDKSAVGFDYQGKTEKHESQKDYSKGFGGKYGVDKDKVDKSAVGFEYQGKTEKHESQKDYVKGFGGKFGVQTDRQDKCALGWDHQEKVQLHESQKDYKSGFGGKFGVQTERQDPSAVGFDYKEKLAKHESQQDYSKGFGGKYGVQKDRMDKNAATFEDIEKPTSTYQKTKPVERVANKTSSIRANLENLAKEKEQEDRRKAEAERAQRMAREKQEQEEARRKLEEQAKAKKQTPPPSPTTQPAEPKTPSSPVYQDAVSYDAESAYKNSSTTYSAEHEPESGYKTTGSDYQEAVSQREAEYEPETVYEVAGAGDHYQAEENTYDEYENELGITAIALYDYQAAGDDEISFDPDDIITNIEMIDDGWWRGVCKGRYGLFPANYVELRQ.

6 Cortactin repeats span residues 89–125 (ASHG…SQVD), 126–162 (SVKG…SQKD), 163–199 (YSSG…SQKD), 200–236 (YSKG…SQKD), 237–273 (YVKG…SQKD), and 274–310 (YKSG…SQQD). One copy of the Cortactin 7; truncated repeat lies at 311-333 (YSKGFGGKYGVQKDRMDKNAATF). The disordered stretch occupies residues 331–477 (ATFEDIEKPT…EAVSQREAEY (147 aa)). Residues 349 to 410 (VERVANKTSS…EEQAKAKKQT (62 aa)) adopt a coiled-coil conformation. Residues 366-405 (LAKEKEQEDRRKAEAERAQRMAREKQEQEEARRKLEEQAK) show a composition bias toward basic and acidic residues. Positions 505–563 (ELGITAIALYDYQAAGDDEISFDPDDIITNIEMIDDGWWRGVCKGRYGLFPANYVELRQ) constitute an SH3 domain.

Post-translationally, acetylated. In terms of processing, in normal cells, appears to be phosphorylated on serine and threonine; in cells expressing activated forms of pp60-src, they become heavily phosphorylated on tyrosine in vitro. Tyrosine phosphorylation in transformed cells may contribute to cellular growth regulation and transformation.

It localises to the cytoplasm. The protein localises to the cytoskeleton. It is found in the cell projection. Its subcellular location is the lamellipodium. The protein resides in the ruffle. It localises to the dendrite. The protein localises to the cell membrane. It is found in the podosome. Its subcellular location is the cell junction. The protein resides in the focal adhesion. It localises to the membrane. The protein localises to the clathrin-coated pit. It is found in the dendritic spine. Its subcellular location is the cell cortex. The protein resides in the endoplasmic reticulum. In terms of biological role, contributes to the organization of the actin cytoskeleton and cell shape. Plays a role in the formation of lamellipodia and in cell migration. Plays a role in the regulation of neuron morphology, axon growth and formation of neuronal growth cones, and may play a role in the regulation of neuronal spine density. Plays a role in focal adhesion assembly and turnover. Plays a role in intracellular protein transport and endocytosis, and in modulating the levels of potassium channels present at the cell membrane. Plays a role in endocytosis via clathrin-coated pits. This is Src substrate protein p85 (CTTN1) from Gallus gallus (Chicken).